The chain runs to 432 residues: MPEYVNWLRHASPYINAHRDCTFVVMLPGDGVAHPNFGNIVHDLVLLHSLGVRLVLVHGSRPQIESRLAQRGITPRYHRDMRITDTETLECVIDAVGQLRISIEARLSMDMAASPMQGSRLRVTSGNVVTARPIGVLEGIDYQHTGEVRRVDRKGINRLLDERHIVLLSPLGYSPTGEIFNLACEDVATRAAIDLAADKLLLFGAETGLLDEQGRLVRELRPQQVPAHLQRLGGNYQAELLDAAAEACRGGVARSHIVSYAEDGALLTELFTRDGGGTLVAQEQFELVREAAIEDVGGLMDLITPLEEQGILVRRSREVLEREITQFSVVEREGLIIACAALYPIADSESGELACLAVNPEYRHGGRGDELLERIENRARALGIKTLFVLTTRTAHWFRERGFEPSSVDRLPSARASLYNFQRNSKIFEKAI.

Residues 286-425 (ELVREAAIED…ASLYNFQRNS (140 aa)) form the N-acetyltransferase domain.

It belongs to the acetyltransferase family. ArgA subfamily.

It localises to the cytoplasm. It carries out the reaction L-glutamate + acetyl-CoA = N-acetyl-L-glutamate + CoA + H(+). The protein operates within amino-acid biosynthesis; L-arginine biosynthesis; N(2)-acetyl-L-ornithine from L-glutamate: step 1/4. The protein is Amino-acid acetyltransferase of Pseudomonas syringae pv. tomato (strain ATCC BAA-871 / DC3000).